The chain runs to 338 residues: Formamidase (338 aa).

The CN hydrolase domain occupies 15–257 (VVIGLAQLAL…DEIVCCELRP (243 aa)). Residue Glu61 is the Proton acceptor of the active site. Lys130 acts as the Proton donor in catalysis. The Nucleophile role is filled by Cys163.

It belongs to the carbon-nitrogen hydrolase superfamily. Aliphatic amidase family.

It catalyses the reaction formamide + H2O = formate + NH4(+). Its function is as follows. Is an aliphatic amidase with a restricted substrate specificity, as it only hydrolyzes formamide. In Pseudomonas syringae pv. syringae (strain B728a), this protein is Formamidase.